The primary structure comprises 62 residues: Snaclec aspercetin subunit beta (62 aa).

Cys-2 and Cys-13 are joined by a disulfide. The region spanning 9-62 (YEGHCYRVFKPPKDWADAERFCSQQAKGGHLVSIERFGREDFVSNLITKNLQRG) is the C-type lectin domain.

The protein belongs to the snaclec family. In terms of assembly, heterodimer; disulfide-linked. Expressed by the venom gland.

It localises to the secreted. Snaclec that binds to von Willebrand factor (VWF) and induces its interaction with GPIbalpha (GP1BA) (via the vWF A1 domain), resulting in platelet aggregation. Intramuscular and intravenous injections in mice induce a dose-dependent drop in platelet count (thrombocytopenia). Pretreatment by intravenous injection by this protein in mice potentiates the hemorrhagic lesion in the skin provoked by the metalloproteinase BaP1 intradermally injected. This result is not observed when both BaP1 and this protein are injected simultaneously. This chain is Snaclec aspercetin subunit beta, found in Bothrops asper (Terciopelo).